The chain runs to 382 residues: Histidinol-phosphate aminotransferase (382 aa).

K215 carries the N6-(pyridoxal phosphate)lysine modification. The segment at 363-382 (NIDNQSKTHSQTSSIRKGTI) is disordered.

It belongs to the class-II pyridoxal-phosphate-dependent aminotransferase family. Histidinol-phosphate aminotransferase subfamily. In terms of assembly, homodimer. Pyridoxal 5'-phosphate serves as cofactor.

The catalysed reaction is L-histidinol phosphate + 2-oxoglutarate = 3-(imidazol-4-yl)-2-oxopropyl phosphate + L-glutamate. The protein operates within amino-acid biosynthesis; L-histidine biosynthesis; L-histidine from 5-phospho-alpha-D-ribose 1-diphosphate: step 7/9. This Yersinia pseudotuberculosis serotype O:3 (strain YPIII) protein is Histidinol-phosphate aminotransferase.